Here is a 1589-residue protein sequence, read N- to C-terminus: Mediator of RNA polymerase II transcription subunit 23 (1589 aa).

The disordered stretch occupies residues 1381–1499; sequence YVSQNEPAPP…PPTPAPMHHQ (119 aa). A compositionally biased stretch (basic and acidic residues) spans 1392-1410; the sequence is TPEREKTPERKDQQKEQQE. Over residues 1457-1470 the composition is skewed to low complexity; the sequence is LHHQQQQQQHLSQM.

The protein belongs to the Mediator complex subunit 23 family. In terms of assembly, component of the Mediator complex.

The protein localises to the nucleus. In terms of biological role, component of the Mediator complex, a coactivator involved in the regulated transcription of nearly all RNA polymerase II-dependent genes. Mediator functions as a bridge to convey information from gene-specific regulatory proteins to the basal RNA polymerase II transcription machinery. Mediator is recruited to promoters by direct interactions with regulatory proteins and serves as a scaffold for the assembly of a functional preinitiation complex with RNA polymerase II and the general transcription factors. In Caenorhabditis briggsae, this protein is Mediator of RNA polymerase II transcription subunit 23 (sur-2).